The following is a 227-amino-acid chain: Probable methylthioribulose-1-phosphate dehydratase (227 aa).

Residue C87 participates in substrate binding. Zn(2+) is bound by residues H105 and H107. Residue E129 is the Proton donor/acceptor of the active site. H185 is a binding site for Zn(2+).

Belongs to the aldolase class II family. MtnB subfamily. Requires Zn(2+) as cofactor.

It is found in the cytoplasm. The enzyme catalyses 5-(methylsulfanyl)-D-ribulose 1-phosphate = 5-methylsulfanyl-2,3-dioxopentyl phosphate + H2O. The protein operates within amino-acid biosynthesis; L-methionine biosynthesis via salvage pathway; L-methionine from S-methyl-5-thio-alpha-D-ribose 1-phosphate: step 2/6. Catalyzes the dehydration of methylthioribulose-1-phosphate (MTRu-1-P) into 2,3-diketo-5-methylthiopentyl-1-phosphate (DK-MTP-1-P). In Drosophila erecta (Fruit fly), this protein is Probable methylthioribulose-1-phosphate dehydratase.